The chain runs to 204 residues: Molybdenum cofactor guanylyltransferase (204 aa).

GTP contacts are provided by residues 10–12 (LAG), Lys23, Asn51, Asp69, and Asp99. Residue Asp99 coordinates Mg(2+).

This sequence belongs to the MobA family. Monomer. Requires Mg(2+) as cofactor.

Its subcellular location is the cytoplasm. It catalyses the reaction Mo-molybdopterin + GTP + H(+) = Mo-molybdopterin guanine dinucleotide + diphosphate. Transfers a GMP moiety from GTP to Mo-molybdopterin (Mo-MPT) cofactor (Moco or molybdenum cofactor) to form Mo-molybdopterin guanine dinucleotide (Mo-MGD) cofactor. This is Molybdenum cofactor guanylyltransferase from Shewanella piezotolerans (strain WP3 / JCM 13877).